Here is a 768-residue protein sequence, read N- to C-terminus: P-selectin (768 aa).

The N-terminal stretch at 1 to 41 (MAGCPKGSWTPRLRSVILGGAQLIWFSALISELVNQKEVAA) is a signal peptide. The Extracellular segment spans residues 42–709 (WTYNYSTKAY…QAGTLTIQEA (668 aa)). A C-type lectin domain is found at 58–158 (VFCRRHFTDL…PCFKRKRALC (101 aa)). 21 cysteine pairs are disulfide-bonded: cysteine 60-cysteine 158, cysteine 131-cysteine 150, cysteine 163-cysteine 174, cysteine 168-cysteine 183, cysteine 185-cysteine 194, cysteine 200-cysteine 244, cysteine 230-cysteine 257, cysteine 262-cysteine 306, cysteine 292-cysteine 319, cysteine 324-cysteine 368, cysteine 354-cysteine 381, cysteine 386-cysteine 430, cysteine 416-cysteine 443, cysteine 448-cysteine 492, cysteine 478-cysteine 505, cysteine 510-cysteine 554, cysteine 540-cysteine 567, cysteine 580-cysteine 624, cysteine 610-cysteine 637, cysteine 642-cysteine 686, and cysteine 672-cysteine 699. Ca(2+) contacts are provided by glutamate 121, asparagine 123, and asparagine 124. Asparagine 123 contacts a carbohydrate. A carbohydrate contacts are provided by glutamate 133 and asparagine 146. Ca(2+) contacts are provided by asparagine 146 and aspartate 147. The 37-residue stretch at 159-195 (YTASCQDMSCSNQGECIETIGSYTCSCYPGFYGPECE) folds into the EGF-like domain. Sushi domains lie at 198–259 (KECG…KCDA), 260–321 (VQCQ…TCEA), 322–383 (IACE…FCEA), 384–445 (LQCP…ECQA), 446–507 (VSCA…TCEA), 508–569 (IKCP…TCKG), 578–639 (VRCP…MCRA), and 640–701 (VKCS…TCQA). A glycan (N-linked (GlcNAc...) asparagine) is linked at asparagine 398. Asparagine 603 is a glycosylation site (N-linked (GlcNAc...) asparagine). Asparagine 654, asparagine 661, and asparagine 679 each carry an N-linked (GlcNAc...) asparagine glycan. Residues 710–733 (LTYLGGAVASTTGLAVGGTLLALL) form a helical membrane-spanning segment. The Cytoplasmic portion of the chain corresponds to 734–768 (RKRLRKKDDGKCPLNPHSHLGTYGVFTNAAYDPTP). Cysteine 745 is lipidated: S-palmitoyl cysteine; alternate. A lipid anchor (S-stearoyl cysteine; alternate) is attached at cysteine 745. The short motif at 756–759 (YGVF) is the Endocytosis signal element. An interaction with SNX17 region spans residues 759-768 (FTNAAYDPTP).

This sequence belongs to the selectin/LECAM family. As to quaternary structure, interacts with SNX17. Interacts with SELPLG/PSGL1 and PODXL2 and mediates neutrophil adhesion and leukocyte rolling. This interaction requires the sialyl-Lewis X epitope of SELPLG and PODXL2, and specific tyrosine sulfation on SELPLG. Interacts (via C-type lectin domain) with alpha-IIb/beta3 integrin ITGA2B:ITGB3 and alpha-V/beta-3 integrin ITGAV:ITGB3. Interacts with alpha5/beta1 integrin ITGA5:ITGB1 and alpha4/beta1 integrin ITGA4:ITGB. Stored in the alpha-granules of platelets and Weibel-Palade bodies of endothelial cells. Upon cell activation by agonists, P-selectin is transported rapidly to the cell surface.

Its subcellular location is the cell membrane. Its function is as follows. Ca(2+)-dependent receptor for myeloid cells that binds to carbohydrates on neutrophils and monocytes. Mediates the interaction of activated endothelial cells or platelets with leukocytes. The ligand recognized is sialyl-Lewis X. Mediates rapid rolling of leukocyte rolling over vascular surfaces during the initial steps in inflammation through interaction with SELPLG. Mediates cell-cell interactions and cell adhesion via the interaction with integrin alpha-IIb/beta3 (ITGA2B:ITGB3) and integrin alpha-V/beta-3 (ITGAV:ITGB3). The chain is P-selectin (Selp) from Mus musculus (Mouse).